Reading from the N-terminus, the 284-residue chain is Bifunctional protein FolD (284 aa).

NADP(+) is bound by residues 163–165 (GAS), Ile-188, and Ile-229.

Belongs to the tetrahydrofolate dehydrogenase/cyclohydrolase family. In terms of assembly, homodimer.

The catalysed reaction is (6R)-5,10-methylene-5,6,7,8-tetrahydrofolate + NADP(+) = (6R)-5,10-methenyltetrahydrofolate + NADPH. It catalyses the reaction (6R)-5,10-methenyltetrahydrofolate + H2O = (6R)-10-formyltetrahydrofolate + H(+). Its pathway is one-carbon metabolism; tetrahydrofolate interconversion. Its function is as follows. Catalyzes the oxidation of 5,10-methylenetetrahydrofolate to 5,10-methenyltetrahydrofolate and then the hydrolysis of 5,10-methenyltetrahydrofolate to 10-formyltetrahydrofolate. The chain is Bifunctional protein FolD from Nautilia profundicola (strain ATCC BAA-1463 / DSM 18972 / AmH).